The primary structure comprises 132 residues: UPF0102 protein Acid_2433 (132 aa).

It belongs to the UPF0102 family.

The chain is UPF0102 protein Acid_2433 from Solibacter usitatus (strain Ellin6076).